A 1190-amino-acid chain; its full sequence is Phosphatidylinositol 3,4,5-trisphosphate 5-phosphatase 1 (1190 aa).

Positions 8 to 104 (WNHGNITRSK…GLVTHLQFPV (97 aa)) constitute an SH2 domain. Residues 111-120 (AIDEPEEDTE) are compositionally biased toward acidic residues. Positions 111–130 (AIDEPEEDTESVMSPPELPP) are disordered. The SH3-binding 1 signature appears at 126-131 (PELPPR). Residue S245 is modified to Phosphoserine. Residues 914–917 (NPNY) carry the NPXY motif 1 motif. Y917 carries the phosphotyrosine modification. S934 is subject to Phosphoserine. At Y944 the chain carries Phosphotyrosine. The interval 946–1190 (QLPKDSSLGP…ESLLGRTAMQ (245 aa)) is disordered. The segment covering 961–971 (PPTPPSQPPLS) has biased composition (pro residues). T963 carries the post-translational modification Phosphothreonine. Phosphoserine is present on residues S966 and S971. Positions 969–974 (PLSPKK) match the SH3-binding 2 motif. The segment covering 989–998 (QETRPGDLGK) has biased composition (basic and acidic residues). Positions 1014–1028 (MFENPLYGSVSPFPK) are interaction with DAB2. The NPXY motif 2 signature appears at 1017-1020 (NPLY). Y1020 is modified (phosphotyrosine). The segment covering 1031-1045 (PRKEQESPKMMRKEP) has biased composition (basic and acidic residues). The short motif at 1038 to 1049 (PKMMRKEPPPCP) is the SH3-binding 3 element. The segment covering 1140–1149 (IPAPRPPLPV) has biased composition (pro residues). Basic and acidic residues predominate over residues 1161 to 1183 (KGRDYRDNTELPHHGKHRQEESL).

Belongs to the inositol 1,4,5-trisphosphate 5-phosphatase family. As to quaternary structure, interacts with tyrosine phosphorylated forms of SHC1. Interacts with tyrosine phosphorylated form of DOK1. Interacts with tyrosine phosphorylated form of DOK3. Interacts with tyrosine phosphorylated form of SLAMF1/CD150. Interacts with PTPN11/SHP-2 in response to IL-3. Interacts with receptor EPOR. Interacts with receptors MS4A2/FCER1B and FCER1G. Interacts with receptors FCGR2B and FCGR3. Interacts with receptor FCGR2A, leading to regulate gene expression during the phagocytic process. Interacts with GRB2. Interacts with PLCG1. Interacts with tyrosine kinases SRC and TEC. Interacts with c-Met/MET. Interacts with MILR1 (tyrosine-phosphorylated). Can weakly interact (via NPXY motif 2) with DAB2 (via PID domain); the interaction is impaired by tyrosine phosphorylation of the NPXY motif. Interacts (via SH2 domain) with tyrosine phosphorylated KLRC1 (via ITIM). Interacts with MPL/TPOR. Post-translationally, tyrosine phosphorylated by the members of the SRC family after exposure to a diverse array of extracellular stimuli such as cytokines, growth factors, antibodies, chemokines, integrin ligands and hypertonic and oxidative stress. Phosphorylated upon IgG receptor FCGR2B-binding.

The protein localises to the cytoplasm. The protein resides in the cell membrane. It is found in the membrane raft. Its subcellular location is the cytoskeleton. It carries out the reaction a 1,2-diacyl-sn-glycero-3-phospho-(1D-myo-inositol-3,4,5-trisphosphate) + H2O = a 1,2-diacyl-sn-glycero-3-phospho-(1D-myo-inositol-3,4-bisphosphate) + phosphate. The enzyme catalyses 1D-myo-inositol 1,3,4,5-tetrakisphosphate + H2O = 1D-myo-inositol 1,3,4-trisphosphate + phosphate. The catalysed reaction is a 1,2-diacyl-sn-glycero-3-phospho-(1D-myo-inositol-4,5-bisphosphate) + H2O = a 1,2-diacyl-sn-glycero-3-phospho-(1D-myo-inositol 4-phosphate) + phosphate. With respect to regulation, activated upon translocation to the sites of synthesis of PtdIns(3,4,5)P3 in the membrane. Its function is as follows. Phosphatidylinositol (PtdIns) phosphatase that specifically hydrolyzes the 5-phosphate of phosphatidylinositol-3,4,5-trisphosphate (PtdIns(3,4,5)P3) to produce PtdIns(3,4)P2, thereby negatively regulating the PI3K (phosphoinositide 3-kinase) pathways. Also able to hydrolyze the 5-phosphate of phosphatidylinositol-4,5-bisphosphate (PtdIns(4,5)P3) and inositol 1,3,4,5-tetrakisphosphate. Acts as a negative regulator of B-cell antigen receptor signaling. Mediates signaling from the FC-gamma-RIIB receptor (FCGR2B), playing a central role in terminating signal transduction from activating immune/hematopoietic cell receptor systems. Acts as a negative regulator of myeloid cell proliferation/survival and chemotaxis, mast cell degranulation, immune cells homeostasis, integrin alpha-IIb/beta-3 signaling in platelets and JNK signaling in B-cells. Regulates proliferation of osteoclast precursors, macrophage programming, phagocytosis and activation and is required for endotoxin tolerance. Involved in the control of cell-cell junctions, CD32a signaling in neutrophils and modulation of EGF-induced phospholipase C activity. Key regulator of neutrophil migration, by governing the formation of the leading edge and polarization required for chemotaxis. Modulates FCGR3/CD16-mediated cytotoxicity in NK cells. Mediates the activin/TGF-beta-induced apoptosis through its Smad-dependent expression. This is Phosphatidylinositol 3,4,5-trisphosphate 5-phosphatase 1 (Inpp5d) from Rattus norvegicus (Rat).